The primary structure comprises 157 residues: Ribosome maturation factor RimP (157 aa).

This sequence belongs to the RimP family.

It is found in the cytoplasm. In terms of biological role, required for maturation of 30S ribosomal subunits. The sequence is that of Ribosome maturation factor RimP from Thermosynechococcus vestitus (strain NIES-2133 / IAM M-273 / BP-1).